We begin with the raw amino-acid sequence, 440 residues long: UDP-N-acetylglucosamine 1-carboxyvinyltransferase 1 (440 aa).

22–23 (KN) is a binding site for phosphoenolpyruvate. Arginine 93 lines the UDP-N-acetyl-alpha-D-glucosamine pocket. The active-site Proton donor is the cysteine 117. Position 117 is a 2-(S-cysteinyl)pyruvic acid O-phosphothioketal (cysteine 117). UDP-N-acetyl-alpha-D-glucosamine contacts are provided by residues 122 to 126 (RPIDQ), aspartate 306, and valine 328.

It belongs to the EPSP synthase family. MurA subfamily.

It is found in the cytoplasm. The catalysed reaction is phosphoenolpyruvate + UDP-N-acetyl-alpha-D-glucosamine = UDP-N-acetyl-3-O-(1-carboxyvinyl)-alpha-D-glucosamine + phosphate. Its pathway is cell wall biogenesis; peptidoglycan biosynthesis. Functionally, cell wall formation. Adds enolpyruvyl to UDP-N-acetylglucosamine. The sequence is that of UDP-N-acetylglucosamine 1-carboxyvinyltransferase 1 from Halalkalibacterium halodurans (strain ATCC BAA-125 / DSM 18197 / FERM 7344 / JCM 9153 / C-125) (Bacillus halodurans).